The following is a 413-amino-acid chain: MAEICYENETMMIETTATVVKKATTTTRRRERSSSQAARRRRMEIRRFKFVSGEQEPVFVDGDLQRRRRRESTVAASTSTVFYETAKEVVVLCESLSSTVVALPDPEAYPKYGVASVCGRRREMEDAVAVHPFFSRHQTEYSSTGFHYCGVYDGHGCSHVAMKCRERLHELVREEFEADADWEKSMARSFTRMDMEVVALNADGAAKCRCELQRPDCDAVGSTAVVSVLTPEKIIVANCGDSRAVLCRNGKAIALSSDHKPDRPDELDRIQAAGGRVIYWDGPRVLGVLAMSRAIGDNYLKPYVISRPEVTVTDRANGDDFLILASDGLWDVVSNETACSVVRMCLRGKVNGQVSSSPEREMTGVGAGNVVVGGGDLPDKACEEASLLLTRLALARQSSDNVSVVVVDLRRDT.

The segment at 21 to 40 (KKATTTTRRRERSSSQAARR) is disordered. A PPM-type phosphatase domain is found at 111–409 (KYGVASVCGR…DNVSVVVVDL (299 aa)). Mn(2+) contacts are provided by Asp153, Gly154, Asp327, and Asp400.

Belongs to the PP2C family. Mg(2+) serves as cofactor. Mn(2+) is required as a cofactor.

It localises to the golgi apparatus. The protein resides in the nucleus. The catalysed reaction is O-phospho-L-seryl-[protein] + H2O = L-seryl-[protein] + phosphate. The enzyme catalyses O-phospho-L-threonyl-[protein] + H2O = L-threonyl-[protein] + phosphate. Acts as a negative regulator of abscisic acid (ABA) signaling for stomatal closure in leaves, and controls water loss during leaf senescence. Activated by the NAC029/NAP transcription factor during ABA signaling in senescing leaves. Functions as a negative regulator of osmotic stress and ABA signaling. Acts as a negative regulator of response to drought. The protein is Probable protein phosphatase 2C 78 of Arabidopsis thaliana (Mouse-ear cress).